Consider the following 204-residue polypeptide: Thymidylate kinase (204 aa).

9–16 contacts ATP; sequence GLDGAGKS.

It belongs to the thymidylate kinase family.

It catalyses the reaction dTMP + ATP = dTDP + ADP. Its function is as follows. Phosphorylation of dTMP to form dTDP in both de novo and salvage pathways of dTTP synthesis. The chain is Thymidylate kinase from Francisella philomiragia subsp. philomiragia (strain ATCC 25017 / CCUG 19701 / FSC 153 / O#319-036).